A 94-amino-acid chain; its full sequence is Cell division protein FtsB (94 aa).

At 1–3 (MRV) the chain is on the cytoplasmic side. The helical transmembrane segment at 4-21 (FALTLSLLLVWLLYTLMW) threads the bilayer. Residues 22 to 94 (GKNGVMDFRA…YRIIGEESRQ (73 aa)) are Periplasmic-facing. Residues 33–76 (QAEIEVQQQVNANLHLRNQEMFAEIDDLRQGLDAIEERARNELG) adopt a coiled-coil conformation.

This sequence belongs to the FtsB family. In terms of assembly, part of a complex composed of FtsB, FtsL and FtsQ.

It localises to the cell inner membrane. Functionally, essential cell division protein. May link together the upstream cell division proteins, which are predominantly cytoplasmic, with the downstream cell division proteins, which are predominantly periplasmic. The chain is Cell division protein FtsB from Vibrio cholerae serotype O1 (strain ATCC 39315 / El Tor Inaba N16961).